A 156-amino-acid chain; its full sequence is 6,7-dimethyl-8-ribityllumazine synthase (156 aa).

5-amino-6-(D-ribitylamino)uracil is bound by residues tryptophan 33, 64–66 (SVE), and 86–88 (VIL). 91–92 (ET) lines the (2S)-2-hydroxy-3-oxobutyl phosphate pocket. The Proton donor role is filled by histidine 94. Isoleucine 119 contributes to the 5-amino-6-(D-ribitylamino)uracil binding site. Position 133 (arginine 133) interacts with (2S)-2-hydroxy-3-oxobutyl phosphate.

This sequence belongs to the DMRL synthase family.

It catalyses the reaction (2S)-2-hydroxy-3-oxobutyl phosphate + 5-amino-6-(D-ribitylamino)uracil = 6,7-dimethyl-8-(1-D-ribityl)lumazine + phosphate + 2 H2O + H(+). The protein operates within cofactor biosynthesis; riboflavin biosynthesis; riboflavin from 2-hydroxy-3-oxobutyl phosphate and 5-amino-6-(D-ribitylamino)uracil: step 1/2. Functionally, catalyzes the formation of 6,7-dimethyl-8-ribityllumazine by condensation of 5-amino-6-(D-ribitylamino)uracil with 3,4-dihydroxy-2-butanone 4-phosphate. This is the penultimate step in the biosynthesis of riboflavin. The polypeptide is 6,7-dimethyl-8-ribityllumazine synthase (Tropheryma whipplei (strain TW08/27) (Whipple's bacillus)).